Consider the following 284-residue polypeptide: D-tagatose-1,6-bisphosphate aldolase subunit GatY (284 aa).

The Proton donor role is filled by aspartate 82. Zn(2+) contacts are provided by histidine 83 and histidine 180. A dihydroxyacetone phosphate-binding site is contributed by glycine 181. Histidine 208 contacts Zn(2+). Dihydroxyacetone phosphate-binding positions include 209-211 and 230-233; these read GAS and NVAT.

It belongs to the class II fructose-bisphosphate aldolase family. TagBP aldolase GatY subfamily. In terms of assembly, forms a complex with GatZ. Zn(2+) serves as cofactor.

It catalyses the reaction D-tagatofuranose 1,6-bisphosphate = D-glyceraldehyde 3-phosphate + dihydroxyacetone phosphate. It participates in carbohydrate metabolism; D-tagatose 6-phosphate degradation; D-glyceraldehyde 3-phosphate and glycerone phosphate from D-tagatose 6-phosphate: step 2/2. In terms of biological role, catalytic subunit of the tagatose-1,6-bisphosphate aldolase GatYZ, which catalyzes the reversible aldol condensation of dihydroxyacetone phosphate (DHAP or glycerone-phosphate) with glyceraldehyde 3-phosphate (G3P) to produce tagatose 1,6-bisphosphate (TBP). Requires GatZ subunit for full activity and stability. Is involved in the catabolism of galactitol. The chain is D-tagatose-1,6-bisphosphate aldolase subunit GatY from Salmonella paratyphi B (strain ATCC BAA-1250 / SPB7).